Consider the following 318-residue polypeptide: Pantothenate kinase (318 aa).

Position 96–103 (96–103 (GSVAVGKS)) interacts with ATP.

This sequence belongs to the prokaryotic pantothenate kinase family.

It is found in the cytoplasm. The catalysed reaction is (R)-pantothenate + ATP = (R)-4'-phosphopantothenate + ADP + H(+). It participates in cofactor biosynthesis; coenzyme A biosynthesis; CoA from (R)-pantothenate: step 1/5. This chain is Pantothenate kinase, found in Nitrobacter hamburgensis (strain DSM 10229 / NCIMB 13809 / X14).